Consider the following 279-residue polypeptide: Protein COP1 SUPPRESSOR 2 (279 aa).

Disordered stretches follow at residues 1 to 29 (MPPK…ISEE) and 57 to 79 (SSTA…EGEK). Basic and acidic residues predominate over residues 68–79 (KPVEKTETEGEK). Positions 86–183 (DTFAQETAVL…EETEAAKKLL (98 aa)) form a coiled coil. Over residues 217 to 229 (LRREHPELYKDRG) the composition is skewed to basic and acidic residues. Residues 217-279 (LRREHPELYK…KRERNRVMRR (63 aa)) are disordered. Over residues 250 to 260 (ADSGKSRQAAT) the composition is skewed to polar residues. Residues 270–279 (KRERNRVMRR) show a composition bias toward basic residues.

This sequence belongs to the TLS1 family. As to quaternary structure, interacts with COP1.

The protein resides in the nucleus. The protein localises to the nucleus speckle. Functionally, inhibits E3 ubiquitin-protein ligase activity of COP1, a central repressor of seedling photomorphogenesis. Represses COP1-mediated turnover of HY5 in the dark. Required for primary root development under normal light growth conditions. The chain is Protein COP1 SUPPRESSOR 2 from Arabidopsis thaliana (Mouse-ear cress).